Consider the following 120-residue polypeptide: NAD(P)H-quinone oxidoreductase subunit 3, chloroplastic (120 aa).

The next 3 helical transmembrane spans lie at I9–G29, M64–V84, and V88–S108.

The protein belongs to the complex I subunit 3 family. As to quaternary structure, NDH is composed of at least 16 different subunits, 5 of which are encoded in the nucleus.

Its subcellular location is the plastid. The protein localises to the chloroplast thylakoid membrane. The enzyme catalyses a plastoquinone + NADH + (n+1) H(+)(in) = a plastoquinol + NAD(+) + n H(+)(out). The catalysed reaction is a plastoquinone + NADPH + (n+1) H(+)(in) = a plastoquinol + NADP(+) + n H(+)(out). Its function is as follows. NDH shuttles electrons from NAD(P)H:plastoquinone, via FMN and iron-sulfur (Fe-S) centers, to quinones in the photosynthetic chain and possibly in a chloroplast respiratory chain. The immediate electron acceptor for the enzyme in this species is believed to be plastoquinone. Couples the redox reaction to proton translocation, and thus conserves the redox energy in a proton gradient. The sequence is that of NAD(P)H-quinone oxidoreductase subunit 3, chloroplastic from Nuphar advena (Common spatterdock).